We begin with the raw amino-acid sequence, 496 residues long: Pup--protein ligase (496 aa).

A Mg(2+)-binding site is contributed by Glu30. ATP is bound at residue Arg73. Tyr75 lines the Mg(2+) pocket. Catalysis depends on Asp77, which acts as the Proton acceptor. Residue Glu83 coordinates Mg(2+). Residues Thr86 and Trp450 each coordinate ATP.

This sequence belongs to the Pup ligase/Pup deamidase family. Pup-conjugating enzyme subfamily.

The catalysed reaction is ATP + [prokaryotic ubiquitin-like protein]-L-glutamate + [protein]-L-lysine = ADP + phosphate + N(6)-([prokaryotic ubiquitin-like protein]-gamma-L-glutamyl)-[protein]-L-lysine.. Its pathway is protein degradation; proteasomal Pup-dependent pathway. It functions in the pathway protein modification; protein pupylation. Functionally, catalyzes the covalent attachment of the prokaryotic ubiquitin-like protein modifier Pup to the proteasomal substrate proteins, thereby targeting them for proteasomal degradation. This tagging system is termed pupylation. The ligation reaction involves the side-chain carboxylate of the C-terminal glutamate of Pup and the side-chain amino group of a substrate lysine. In Bifidobacterium animalis subsp. lactis (strain AD011), this protein is Pup--protein ligase.